Here is a 422-residue protein sequence, read N- to C-terminus: Testin (422 aa).

Residues 92–199 (MILTNPVPAK…GDVKLPSEMD (108 aa)) form the PET domain. 2 disordered regions span residues 135–162 (QPVA…QDPS) and 194–226 (LPSE…EDKS). The span at 194-212 (LPSEMDVKPGDRSSLDGGD) shows a compositional bias: basic and acidic residues. 3 LIM zinc-binding domains span residues 234 to 297 (YSCY…CDSE), 299 to 359 (PRCA…NHAV), and 362 to 422 (QGCH…MMMS).

It belongs to the prickle / espinas / testin family. In terms of assembly, interacts via LIM domain 1 with ZYX. Interacts (via LIM domain 3) with ENAH and VASP. Interacts with ALKBH4, talin, actin, alpha-actinin, GRIP1 and PXN. Interacts (via LIM domain 2) with ACTL7A (via N-terminus). Heterodimer with ACTL7A; the heterodimer interacts with ENAH to form a heterotrimer.

Its subcellular location is the cytoplasm. It is found in the cell junction. It localises to the focal adhesion. Functionally, scaffold protein that may play a role in cell adhesion, cell spreading and in the reorganization of the actin cytoskeleton. Plays a role in the regulation of cell proliferation. May act as a tumor suppressor. This is Testin (TES) from Monodelphis domestica (Gray short-tailed opossum).